A 1786-amino-acid chain; its full sequence is Transcription initiation factor TFIID subunit 1b (1786 aa).

2 disordered regions span residues 54 to 83 and 350 to 372; these read EDYDEQGGQEKEHVPVEKSFDSEEREPVVL and FGSRGSQSTNESTNKSRHHPQLL. Basic and acidic residues predominate over residues 61 to 83; that stretch reads GQEKEHVPVEKSFDSEEREPVVL. Residues 352-362 are compositionally biased toward polar residues; that stretch reads SRGSQSTNEST. Residues 574 to 650 enclose the Ubiquitin-like domain; it reads MTIVVKSLGG…VHLLRTKVHL (77 aa). A compositionally biased stretch (basic residues) spans 1303-1313; that stretch reads MKTNKHCPKYR. Disordered regions lie at residues 1303–1382, 1397–1471, and 1596–1634; these read MKTN…DVAA, LKIS…KDQA, and SEREEEKRRKAKQKKKLQRGILENYPPRRNDGISSESGQ. The span at 1357–1377 shows a compositional bias: polar residues; it reads TKISVNEATKVGDSTSKTPGS. The segment covering 1397–1407 has biased composition (basic residues); sequence LKISSKAKPKA. The segment covering 1433 to 1464 has biased composition (polar residues); sequence HNPSVSGQLLPSTETDQAASSRYTTSVPQPSL. Coiled-coil stretches lie at residues 1591 to 1620 and 1752 to 1786; these read REVIRSEREEEKRRKAKQKKKLQRGILENY and LADELLVKCDRLLDEYRDELKEAEKGIVDSSDSLR. The span at 1604–1613 shows a compositional bias: basic residues; the sequence is RKAKQKKKLQ. A Bromo domain is found at 1656–1774; it reads KRRKKGQVGL…DEYRDELKEA (119 aa).

This sequence belongs to the TAF1 family. As to quaternary structure, component of the TFIID complex. TFIID is composed of TATA binding protein (TBP) and a number of TBP-associated factors (TAFs) whose MWs range from 14-217 kDa. As to expression, expressed in roots, shoots, leaves and inflorescences.

The protein resides in the nucleus. Its function is as follows. TAFs are components of the transcription factor IID (TFIID) complex that is essential for mediating regulation of RNA polymerase transcription. Core scaffold of the TFIID complex. Acts as a histone acetyltransferase involved in the light regulation of growth and gene expression. Required for H3K9, H3K27, and H4K12 acetylation on the target promoters. This chain is Transcription initiation factor TFIID subunit 1b (TAF1B), found in Arabidopsis thaliana (Mouse-ear cress).